The primary structure comprises 549 residues: T-complex protein 1 subunit theta (549 aa).

This sequence belongs to the TCP-1 chaperonin family. In terms of assembly, heterooligomeric complex of about 850 to 900 kDa that forms two stacked rings, 12 to 16 nm in diameter. Interacts with CCT3, KNAT1, STM and TTG1. As to expression, expressed in shoot meristems, root tip, vasculature and leaf epidermis.

The protein resides in the cytoplasm. Functionally, molecular chaperone; assists the folding of proteins upon ATP hydrolysis. Known to play a role, in vitro, in the folding of actin and tubulin. Contributes to stem cell maintenance through its impact on transcription factors trafficking through plasmodesmata. Probably involved in refolding translocated, partially unfolded proteins, including viral movement proteins. The polypeptide is T-complex protein 1 subunit theta (Arabidopsis thaliana (Mouse-ear cress)).